Here is a 1202-residue protein sequence, read N- to C-terminus: PAN2-PAN3 deadenylation complex catalytic subunit PAN2 (1202 aa).

4 WD repeats span residues 153 to 193 (DENE…QKYA), 195 to 231 (ETPGVTIMRQTNRFFFCGHTSGKVSLRDLRTFKVEHE), 244 to 280 (VHGNLLAACGFSSRLTGLACDRFLKVYDLRMMRAITP), and 328 to 367 (PVGPLLMTFDVSASKQALAFGDSEGCVHLWTDSPEPSFNP). A linker region spans residues 368–485 (YSRETEFALP…VGREEEPHLH (118 aa)). The region spanning 486 to 924 (MVSKKYRKVT…VPAILYYVKR (439 aa)) is the USP domain. At Ser791 the chain carries Phosphoserine. Residues 975-1147 (VGLDAEFVTL…EDARTALQLY (173 aa)) form the Exonuclease domain. Residues Asp978, Glu980, Asp1087, and Asp1139 each coordinate a divalent metal cation. At Ser1189 the chain carries Phosphoserine.

This sequence belongs to the peptidase C19 family. PAN2 subfamily. As to quaternary structure, forms a heterotrimer with an asymmetric homodimer of the regulatory subunit PAN3 to form the poly(A)-nuclease (PAN) deadenylation complex. Interacts with PAN3 isoform 1/Pan3L and isoform 3/Pan3S. Interacts with ZFP36. A divalent metal cation serves as cofactor.

The protein localises to the cytoplasm. Its subcellular location is the P-body. It localises to the nucleus. The enzyme catalyses Exonucleolytic cleavage of poly(A) to 5'-AMP.. With respect to regulation, positively regulated by the regulatory subunit PAN3. In terms of biological role, catalytic subunit of the poly(A)-nuclease (PAN) deadenylation complex, one of two cytoplasmic mRNA deadenylases involved in general and miRNA-mediated mRNA turnover. PAN specifically shortens poly(A) tails of RNA and the activity is stimulated by poly(A)-binding protein (PABP). PAN deadenylation is followed by rapid degradation of the shortened mRNA tails by the CCR4-NOT complex. Deadenylated mRNAs are then degraded by two alternative mechanisms, namely exosome-mediated 3'-5' exonucleolytic degradation, or deadenylation-dependent mRNA decaping and subsequent 5'-3' exonucleolytic degradation by XRN1. Also acts as an important regulator of the HIF1A-mediated hypoxic response. Required for HIF1A mRNA stability independent of poly(A) tail length regulation. This chain is PAN2-PAN3 deadenylation complex catalytic subunit PAN2, found in Homo sapiens (Human).